Consider the following 346-residue polypeptide: MNSILRHNWNLKEVEALFAMPFNDLMFKAQTIHRENFNPNEVQVSTLLSIKTGACPEDCKYCSQSARNKTDLEKESLLAVEKVLEAAQRAKEMGSTRFCMGAAWRNPKERDMPYVLDMVKSVKALGMETCMTLGMLSGDQADQLNGAGLDYYNHNLDTSPEHYNQIITTRTFQDRLDTLSNVRSAGMKVCSGGIVGLGEKAVDRSSLLIQLANLNPQPESVPINMLVKVEGTPLADIDDLESFDFIRCIAVARIMMPHSHVRLSAGRTAMNEQMQAMCFLAGANSIFYGCKLLTAENPETNQDIALFEKLGINTETVAGDTERSDNIVKTAIVDQQNSDLFYNASA.

The 225-residue stretch at 40–264 (NEVQVSTLLS…MMPHSHVRLS (225 aa)) folds into the Radical SAM core domain. [4Fe-4S] cluster is bound by residues Cys-55, Cys-59, and Cys-62. Positions 99, 130, 190, and 262 each coordinate [2Fe-2S] cluster.

This sequence belongs to the radical SAM superfamily. Biotin synthase family. As to quaternary structure, homodimer. [4Fe-4S] cluster serves as cofactor. It depends on [2Fe-2S] cluster as a cofactor.

It carries out the reaction (4R,5S)-dethiobiotin + (sulfur carrier)-SH + 2 reduced [2Fe-2S]-[ferredoxin] + 2 S-adenosyl-L-methionine = (sulfur carrier)-H + biotin + 2 5'-deoxyadenosine + 2 L-methionine + 2 oxidized [2Fe-2S]-[ferredoxin]. The protein operates within cofactor biosynthesis; biotin biosynthesis; biotin from 7,8-diaminononanoate: step 2/2. Its function is as follows. Catalyzes the conversion of dethiobiotin (DTB) to biotin by the insertion of a sulfur atom into dethiobiotin via a radical-based mechanism. The protein is Biotin synthase of Colwellia psychrerythraea (strain 34H / ATCC BAA-681) (Vibrio psychroerythus).